The chain runs to 389 residues: DNA replication and repair protein RecF (389 aa).

Residue 30–37 (GPNGFGKT) coordinates ATP.

The protein belongs to the RecF family.

The protein localises to the cytoplasm. In terms of biological role, the RecF protein is involved in DNA metabolism; it is required for DNA replication and normal SOS inducibility. RecF binds preferentially to single-stranded, linear DNA. It also seems to bind ATP. The sequence is that of DNA replication and repair protein RecF from Mycolicibacterium gilvum (strain PYR-GCK) (Mycobacterium gilvum (strain PYR-GCK)).